The following is a 368-amino-acid chain: C6 finger domain transcription factor tcpZ (368 aa).

A DNA-binding region (zn(2)-C6 fungal-type) is located at residues Cys30 to Cys56. Residues Phe84–Ala109 are disordered.

Its subcellular location is the nucleus. In terms of biological role, transcription factor that specifically regulates the thioclapurine biosynthesis gene cluster. The polypeptide is C6 finger domain transcription factor tcpZ (Claviceps purpurea (strain 20.1) (Ergot fungus)).